The following is a 481-amino-acid chain: Rhamnogalacturonan I rhamnosyltransferase 4 (481 aa).

A helical; Signal-anchor for type II membrane protein transmembrane segment spans residues 33 to 55; that stretch reads VWFFRVCSCILVWTCLIQLFWHS. N-linked (GlcNAc...) asparagine glycosylation is found at N85 and N118. 258 to 260 is a binding site for substrate; it reads HLR. N-linked (GlcNAc...) asparagine glycosylation is found at N372 and N432.

It belongs to the glycosyltransferase GT106 family.

It is found in the golgi apparatus membrane. It carries out the reaction alpha-D-galacturonosyl-[(1-&gt;2)-alpha-L-rhamnosyl-(1-&gt;4)-alpha-D-galacturonosyl](n) + UDP-beta-L-rhamnose = [(1-&gt;2)-alpha-L-rhamnosyl-(1-&gt;4)-alpha-D-galacturonosyl](n+1) + UDP + H(+). It functions in the pathway glycan metabolism; pectin biosynthesis. In terms of biological role, glycosyltransferase involved in the formation of rhamnogalacturonan I (RG-I) oligosaccharides in the seed coat mucilage, which is a specialized cell wall with abundant RG-I. Transfers the rhamnose residue from UDP-beta-L-rhamnose to RG-I oligosaccharides. This chain is Rhamnogalacturonan I rhamnosyltransferase 4, found in Arabidopsis thaliana (Mouse-ear cress).